A 306-amino-acid chain; its full sequence is Acetyl-coenzyme A carboxylase carboxyl transferase subunit beta (306 aa).

In terms of domain architecture, CoA carboxyltransferase N-terminal spans 25–294 (VWTKCDSCGQ…PSPDAPREAV (270 aa)). Zn(2+) contacts are provided by Cys-29, Cys-32, Cys-48, and Cys-51. Residues 29-51 (CDSCGQVLYRAELERNLEVCPKC) form a C4-type zinc finger. The tract at residues 286 to 306 (SPDAPREAVVVPPVPDQDHEA) is disordered.

This sequence belongs to the AccD/PCCB family. In terms of assembly, acetyl-CoA carboxylase is a heterohexamer composed of biotin carboxyl carrier protein (AccB), biotin carboxylase (AccC) and two subunits each of ACCase subunit alpha (AccA) and ACCase subunit beta (AccD). Requires Zn(2+) as cofactor.

The protein localises to the cytoplasm. It catalyses the reaction N(6)-carboxybiotinyl-L-lysyl-[protein] + acetyl-CoA = N(6)-biotinyl-L-lysyl-[protein] + malonyl-CoA. The protein operates within lipid metabolism; malonyl-CoA biosynthesis; malonyl-CoA from acetyl-CoA: step 1/1. Functionally, component of the acetyl coenzyme A carboxylase (ACC) complex. Biotin carboxylase (BC) catalyzes the carboxylation of biotin on its carrier protein (BCCP) and then the CO(2) group is transferred by the transcarboxylase to acetyl-CoA to form malonyl-CoA. The polypeptide is Acetyl-coenzyme A carboxylase carboxyl transferase subunit beta (Cronobacter sakazakii (strain ATCC BAA-894) (Enterobacter sakazakii)).